A 184-amino-acid chain; its full sequence is Probable archaeosortase E (184 aa).

4 consecutive transmembrane segments (helical) span residues 27-47 (ILFLIKFYIIFLVVFFILSYF), 86-106 (VVEECTGSFLIAGLLALIIVY), 114-134 (IIGIFFVLLAFFVNIFRIVLI), and 151-171 (IAGYGVILTLVPVLVIGYLKI). Cysteine 90 (acyl-thioester intermediate) is an active-site residue. The active-site Proton donor is arginine 130.

The protein belongs to the exosortase/archaeosortase family. Archaeosortase E subfamily.

Its subcellular location is the cell membrane. Its function is as follows. Transpeptidase that recognizes and modifies its substrate by proteolytic cleavage of a sorting signal. Following cleavage, a covalent intermediate is formed via a thioester bond between the archaeosortase and its substrate, which is then transferred and covalently attached to the cell membrane. In Methanocaldococcus jannaschii (strain ATCC 43067 / DSM 2661 / JAL-1 / JCM 10045 / NBRC 100440) (Methanococcus jannaschii), this protein is Probable archaeosortase E.